The following is a 194-amino-acid chain: uncharacterized protein (194 aa).

It to A.rhizogenes plasmid pRia4B ORF-3 in virA region.

This is an uncharacterized protein from Sinorhizobium fredii (strain NBRC 101917 / NGR234).